Here is a 142-residue protein sequence, read N- to C-terminus: Baculoviral IAP repeat-containing protein 5 (142 aa).

One copy of the BIR repeat lies at 18–88; it reads RISTFKNWPF…KHSSGCAFLS (71 aa). At serine 20 the chain carries Phosphoserine; by AURKC. Lysine 23 is modified (N6-acetyllysine). Residue threonine 34 is modified to Phosphothreonine; by CDK1 and CDK15. At threonine 48 the chain carries Phosphothreonine. Zn(2+) contacts are provided by cysteine 57, cysteine 60, histidine 77, and cysteine 84. N6-acetyllysine occurs at positions 90, 110, 112, and 115. A Phosphothreonine; by AURKB modification is found at threonine 117. Position 129 is an N6-acetyllysine (lysine 129).

The protein belongs to the IAP family. In terms of assembly, monomer or homodimer. Exists as a homodimer in the apo state and as a monomer in the CPC-bound state. The monomer protects cells against apoptosis more efficiently than the dimer. Only the dimeric form is capable of enhancing tubulin stability in cells. When phosphorylated, interacts with LAMTOR5/HBXIP; the resulting complex binds pro-CASP9, as well as active CASP9, but much less efficiently. Component of the chromosomal passenger complex (CPC) composed of at least BIRC5/survivin, CDCA8/borealin, INCENP, AURKB or AURKC; in the complex forms a triple-helix bundle-based subcomplex with INCENP and CDCA8. Interacts with JTB. Interacts (via BIR domain) with histone H3 phosphorylated at 'Thr-3' (H3pT3). Interacts with EVI5. Interacts with GTP-bound RAN in both the S and M phases of the cell cycle. Interacts with USP9X. Interacts with tubulin. Interacts with BIRC2/c-IAP1. The acetylated form at Lys-129 interacts with STAT3. The monomeric form deacetylated at Lys-129 interacts with XPO1/CRM1. The monomeric form interacts with XIAP/BIRC4. Both the dimeric and monomeric form can interact with DIABLO/SMAC. Interacts with BIRC6/bruce. Interacts with FBXL7; this interaction facilitates the polyubiquitination and subsequent proteasomal degradation of BIRC5 by the SCF(FBXL7) E3 ubiquitin-protein ligase complex. Post-translationally, ubiquitinated by the Cul9-RING ubiquitin-protein ligase complex, leading to its degradation. Ubiquitination is required for centrosomal targeting. Deubiquitinated by USP35 or USP38; leading to stabilization. In terms of processing, acetylation at Lys-129 results in its homodimerization, while deacetylation promotes the formation of monomers which heterodimerize with XPO1/CRM1 which facilitates its nuclear export. The acetylated form represses STAT3 transactivation. The dynamic equilibrium between its acetylation and deacetylation at Lys-129 determines its interaction with XPO1/CRM1, its subsequent subcellular localization, and its ability to inhibit STAT3 transactivation. In vitro phosphorylation at Thr-117 by AURKB prevents interaction with INCENP and localization to mitotic chromosomes. Phosphorylation at Thr-48 by CK2 is critical for its mitotic and anti-apoptotic activities. Phosphorylation at Thr-34 by CDK15 is critical for its anti-apoptotic activity. Phosphorylation at Ser-20 by AURKC is critical for regulation of proper chromosome alignment and segregation, and possibly cytokinesis.

It localises to the cytoplasm. Its subcellular location is the nucleus. The protein localises to the chromosome. The protein resides in the centromere. It is found in the cytoskeleton. It localises to the spindle. Its subcellular location is the kinetochore. The protein localises to the midbody. Functionally, multitasking protein that has dual roles in promoting cell proliferation and preventing apoptosis. Component of a chromosome passage protein complex (CPC) which is essential for chromosome alignment and segregation during mitosis and cytokinesis. Acts as an important regulator of the localization of this complex; directs CPC movement to different locations from the inner centromere during prometaphase to midbody during cytokinesis and participates in the organization of the center spindle by associating with polymerized microtubules. Involved in the recruitment of CPC to centromeres during early mitosis via association with histone H3 phosphorylated at 'Thr-3' (H3pT3) during mitosis. The complex with RAN plays a role in mitotic spindle formation by serving as a physical scaffold to help deliver the RAN effector molecule TPX2 to microtubules. May counteract a default induction of apoptosis in G2/M phase. The acetylated form represses STAT3 transactivation of target gene promoters. May play a role in neoplasia. Inhibitor of CASP3 and CASP7. Essential for the maintenance of mitochondrial integrity and function. The polypeptide is Baculoviral IAP repeat-containing protein 5 (BIRC5) (Felis catus (Cat)).